The primary structure comprises 367 residues: Glutamate 5-kinase (367 aa).

K9 provides a ligand contact to ATP. Substrate-binding residues include S49, D136, and N148. ATP-binding positions include 168-169 and 210-216; these read TD and TGGMKSK. In terms of domain architecture, PUA spans 276-350; sequence SGQIEVDAGA…GMQSQDIQVR (75 aa).

It belongs to the glutamate 5-kinase family.

It localises to the cytoplasm. It carries out the reaction L-glutamate + ATP = L-glutamyl 5-phosphate + ADP. Its pathway is amino-acid biosynthesis; L-proline biosynthesis; L-glutamate 5-semialdehyde from L-glutamate: step 1/2. Its function is as follows. Catalyzes the transfer of a phosphate group to glutamate to form L-glutamate 5-phosphate. The protein is Glutamate 5-kinase of Bacillus cereus (strain B4264).